Here is a 456-residue protein sequence, read N- to C-terminus: Mitochondrial import inner membrane translocase subunit TIM50 (456 aa).

A mitochondrion-targeting transit peptide spans 1 to 22 (MSLSKLSQKCFSRHHARTFIRF). Residues 23-171 (SSSDFQSLLG…RRKRMERNTR (149 aa)) lie on the Mitochondrial matrix side of the membrane. 2 disordered regions span residues 101–120 (ETEK…AIDE) and 132–165 (EEAA…RRKR). Residues 137–153 (SKTSAPSGSSGDNNDQP) show a composition bias toward polar residues. A helical transmembrane segment spans residues 172-192 (IGGYVLLGGSVIGFISFCFYY). At 193 to 456 (GRAQRDEAGN…LFGFRRHASA (264 aa)) the chain is on the mitochondrial intermembrane side. An FCP1 homology domain is found at 247–391 (YLQPKYTIVI…VDLAELLKTI (145 aa)).

Belongs to the TIM50 family. As to quaternary structure, component of the TIM23 complex at least composed of tim-23, tim-17 and tim-50.

It localises to the mitochondrion inner membrane. Functionally, essential component of the TIM23 complex, a complex that mediates the translocation of transit peptide-containing proteins across the mitochondrial inner membrane. This Caenorhabditis briggsae protein is Mitochondrial import inner membrane translocase subunit TIM50 (scpl-4).